A 328-amino-acid polypeptide reads, in one-letter code: MSHVELQPGFDFQQAGKEVLAIERECLAELDQYINQNFTLACEKMFWCKGKVVVMGMGKSGHIGRKMAATFASTGTPSFFVHPSEAAHGDLGMVTPQDVVIAISNSGESSEITALIPVLKRLHVPLICITGRPESSMARAADVHLCVKVAKEACPLGLAPTSSTTATLVMGDALAVALLKARGFTAEDFALSHPGGALGRKLLLRVNDIMHTGDEIPHVKKTASLRDALLEVTRKNLGMTVICDDNMMIEGIFTDGDLRRVFDMGVDVRQLSIADVMTPGGIRVRPGILAVEALNLMQSRHITSVMVADGDHLLGVLHMHDLLRAGVV.

The 143-residue stretch at 42-184 (CEKMFWCKGK…AVALLKARGF (143 aa)) folds into the SIS domain. Residues 75 to 76 (GT), His82, His88, 114 to 123 (ALIPVLKRLH), 148 to 150 (KVA), Thr222, and Asp275 contribute to the substrate site. His82 contributes to the Zn(2+) binding site. A CBS 1 domain is found at 210–268 (MHTGDEIPHVKKTASLRDALLEVTRKNLGMTVICDDNMMIEGIFTDGDLRRVFDMGVDV). The region spanning 277–328 (MTPGGIRVRPGILAVEALNLMQSRHITSVMVADGDHLLGVLHMHDLLRAGVV) is the CBS 2 domain.

It belongs to the SIS family. GutQ/KpsF subfamily. Homotetramer.

It catalyses the reaction D-arabinose 5-phosphate = D-ribulose 5-phosphate. It participates in carbohydrate biosynthesis; 3-deoxy-D-manno-octulosonate biosynthesis; 3-deoxy-D-manno-octulosonate from D-ribulose 5-phosphate: step 1/3. Its pathway is bacterial outer membrane biogenesis; lipopolysaccharide biosynthesis. Its function is as follows. Involved in the biosynthesis of 3-deoxy-D-manno-octulosonate (KDO), a unique 8-carbon sugar component of lipopolysaccharides (LPSs). Catalyzes the reversible aldol-ketol isomerization between D-ribulose 5-phosphate (Ru5P) and D-arabinose 5-phosphate (A5P). The polypeptide is Arabinose 5-phosphate isomerase KdsD (kdsD) (Shigella flexneri).